A 261-amino-acid polypeptide reads, in one-letter code: Cytochrome c oxidase subunit 3 (261 aa).

The Mitochondrial matrix segment spans residues Met1 to Pro15. A helical transmembrane segment spans residues Trp16–Trp34. Over Phe35–Thr40 the chain is Mitochondrial intermembrane. A helical membrane pass occupies residues Ile41–Thr66. The Mitochondrial matrix segment spans residues Phe67–Thr72. The chain crosses the membrane as a helical span at residues Pro73–Ser105. Residues Leu106 to Glu128 lie on the Mitochondrial intermembrane side of the membrane. The chain crosses the membrane as a helical span at residues Val129–Met152. Topologically, residues Glu153–His155 are mitochondrial matrix. The helical transmembrane segment at Arg156–Glu183 threads the bilayer. Residues Ala184 to Asp190 lie on the Mitochondrial intermembrane side of the membrane. The chain crosses the membrane as a helical span at residues Gly191 to Leu223. Residues Lys224 to His232 are Mitochondrial matrix-facing. A helical membrane pass occupies residues Phe233 to Ile256. The Mitochondrial intermembrane segment spans residues Tyr257 to Ser261.

This sequence belongs to the cytochrome c oxidase subunit 3 family. In terms of assembly, component of the cytochrome c oxidase (complex IV, CIV), a multisubunit enzyme composed of 14 subunits. The complex is composed of a catalytic core of 3 subunits MT-CO1, MT-CO2 and MT-CO3, encoded in the mitochondrial DNA, and 11 supernumerary subunits COX4I, COX5A, COX5B, COX6A, COX6B, COX6C, COX7A, COX7B, COX7C, COX8 and NDUFA4, which are encoded in the nuclear genome. The complex exists as a monomer or a dimer and forms supercomplexes (SCs) in the inner mitochondrial membrane with NADH-ubiquinone oxidoreductase (complex I, CI) and ubiquinol-cytochrome c oxidoreductase (cytochrome b-c1 complex, complex III, CIII), resulting in different assemblies (supercomplex SCI(1)III(2)IV(1) and megacomplex MCI(2)III(2)IV(2)).

The protein resides in the mitochondrion inner membrane. The enzyme catalyses 4 Fe(II)-[cytochrome c] + O2 + 8 H(+)(in) = 4 Fe(III)-[cytochrome c] + 2 H2O + 4 H(+)(out). In terms of biological role, component of the cytochrome c oxidase, the last enzyme in the mitochondrial electron transport chain which drives oxidative phosphorylation. The respiratory chain contains 3 multisubunit complexes succinate dehydrogenase (complex II, CII), ubiquinol-cytochrome c oxidoreductase (cytochrome b-c1 complex, complex III, CIII) and cytochrome c oxidase (complex IV, CIV), that cooperate to transfer electrons derived from NADH and succinate to molecular oxygen, creating an electrochemical gradient over the inner membrane that drives transmembrane transport and the ATP synthase. Cytochrome c oxidase is the component of the respiratory chain that catalyzes the reduction of oxygen to water. Electrons originating from reduced cytochrome c in the intermembrane space (IMS) are transferred via the dinuclear copper A center (CU(A)) of subunit 2 and heme A of subunit 1 to the active site in subunit 1, a binuclear center (BNC) formed by heme A3 and copper B (CU(B)). The BNC reduces molecular oxygen to 2 water molecules using 4 electrons from cytochrome c in the IMS and 4 protons from the mitochondrial matrix. The chain is Cytochrome c oxidase subunit 3 (MT-CO3) from Tragelaphus strepsiceros (Greater kudu).